A 320-amino-acid polypeptide reads, in one-letter code: Uroplakin-3b (320 aa).

The N-terminal stretch at 1–29 (MGLPWGQPHLGLQMLLLALNCLRPSLSLG) is a signal peptide. The Lumenal portion of the chain corresponds to 30 to 240 (EWGSWMDASS…LHPLFSGRPP (211 aa)). N-linked (GlcNAc...) asparagine glycosylation is present at asparagine 133. Residues 241 to 266 (TLGLLGSLYHALLQPVVAGGGPGAAA) traverse the membrane as a helical segment. The Cytoplasmic portion of the chain corresponds to 267-320 (DRLLHGQALHDPPHPTQRGRHTAGGLQAWPGPPPQPQPLAWPLCMGLGEMGRWE). Residues 273–303 (QALHDPPHPTQRGRHTAGGLQAWPGPPPQPQ) are disordered.

This sequence belongs to the uroplakin-3 family. As to quaternary structure, heterodimer with uroplakin-1B (UPK1B).

The protein resides in the cell membrane. In terms of biological role, component of the asymmetric unit membrane (AUM); a highly specialized biomembrane elaborated by terminally differentiated urothelial cells. May play an important role in AUM-cytoskeleton interaction in terminally differentiated urothelial cells. It also contributes to the formation of urothelial glycocalyx which may play an important role in preventing bacterial adherence. The chain is Uroplakin-3b (UPK3B) from Homo sapiens (Human).